Reading from the N-terminus, the 119-residue chain is Large ribosomal subunit protein bL17 (119 aa).

It belongs to the bacterial ribosomal protein bL17 family. Part of the 50S ribosomal subunit. Contacts protein L32.

This Psychrobacter arcticus (strain DSM 17307 / VKM B-2377 / 273-4) protein is Large ribosomal subunit protein bL17.